The chain runs to 337 residues: Glyceraldehyde-3-phosphate dehydrogenase 1 (337 aa).

NAD(+) contacts are provided by residues 12-13 (RI), Asp-34, and Met-79. D-glyceraldehyde 3-phosphate contacts are provided by residues 151-153 (SCT), Thr-182, 211-212 (TG), and Arg-234. The active-site Nucleophile is Cys-152. Position 316 (Asn-316) interacts with NAD(+).

It belongs to the glyceraldehyde-3-phosphate dehydrogenase family. Homotetramer.

Its subcellular location is the cytoplasm. The catalysed reaction is D-glyceraldehyde 3-phosphate + phosphate + NAD(+) = (2R)-3-phospho-glyceroyl phosphate + NADH + H(+). The protein operates within carbohydrate degradation; glycolysis; pyruvate from D-glyceraldehyde 3-phosphate: step 1/5. This is Glyceraldehyde-3-phosphate dehydrogenase 1 (GAP1) from Giardia intestinalis (Giardia lamblia).